The chain runs to 112 residues: Small ribosomal subunit protein bS6 (112 aa).

Belongs to the bacterial ribosomal protein bS6 family.

Its function is as follows. Binds together with bS18 to 16S ribosomal RNA. This is Small ribosomal subunit protein bS6 (rpsF) from Chlamydia pneumoniae (Chlamydophila pneumoniae).